The following is a 293-amino-acid chain: NAD kinase (293 aa).

D73 functions as the Proton acceptor in the catalytic mechanism. NAD(+) is bound by residues 73 to 74 (DG), 147 to 148 (NE), H158, R175, D177, 188 to 193 (TAYSLS), and Q248.

Belongs to the NAD kinase family. It depends on a divalent metal cation as a cofactor.

The protein resides in the cytoplasm. It carries out the reaction NAD(+) + ATP = ADP + NADP(+) + H(+). Its function is as follows. Involved in the regulation of the intracellular balance of NAD and NADP, and is a key enzyme in the biosynthesis of NADP. Catalyzes specifically the phosphorylation on 2'-hydroxyl of the adenosine moiety of NAD to yield NADP. The sequence is that of NAD kinase from Photobacterium profundum (strain SS9).